The primary structure comprises 342 residues: Uroporphyrinogen decarboxylase (342 aa).

Substrate contacts are provided by residues 21-25, D71, Y148, S203, and H316; that span reads RQAGR.

It belongs to the uroporphyrinogen decarboxylase family. As to quaternary structure, homodimer.

The protein resides in the cytoplasm. The enzyme catalyses uroporphyrinogen III + 4 H(+) = coproporphyrinogen III + 4 CO2. The protein operates within porphyrin-containing compound metabolism; protoporphyrin-IX biosynthesis; coproporphyrinogen-III from 5-aminolevulinate: step 4/4. Its function is as follows. Catalyzes the decarboxylation of four acetate groups of uroporphyrinogen-III to yield coproporphyrinogen-III. This is Uroporphyrinogen decarboxylase from Campylobacter curvus (strain 525.92).